The sequence spans 784 residues: MVKFTKQFEGQLVPEWKDAFVDYSQLKKDLKKIHLFTNGVEKKHTETSLIKTVKSSLGRLSIFGNKGREQSRVIQVHKKLASSGSNNDVYETELLEKIADDTDAAKEFFACLDMQLNKVNQFYKTKEKEFLERGECLKKQMDILIELKDAFKQKQANGESTQESKEDDSISCTISCEYDSVRGRTEEMQLQVSCLDNLEDNGEEALESLGSEEPIKANNEDSKLTTVSSRVFSCQGKNVKIKIPLTNPSRTFSAISYLINQSSSKKNGPDGGNKLQISKKKLSHAEKMIKGALTELFKGLNYLKTYRNLNILAFMNILKKFDKVTGKQILPIYLKVVESSYFNISDKVMILSDEVEEWFIKHLAGENRRKAMKYLKPHHRKESHSVTFFIGLFTGCFVALLAGYIIVAHLTGMYRQHSANTFYMETAYPVLSMFGLLFLHLFLYGCNIFMWRKARINYSFIFELGSKNELKYRDVFLICTASMSAIAGVMFVHLSLLEKGYSFRQVQVIPGLLLLGFLLILICPLNIFYKSSRYRLISVIRNIVFSPLYKVVMLDFFMADQLCSQVPMLRNLEYIACYYITGSYATQDYEYCMRVKYYRDLAYAVSFLPYYWRAMQCARRWFDEGETSHLVNLGKYVSAMLAAGTKVAYEKERSLGWLCLVVAMSSVATIYQLYWDFVKDWGLLQHNSNNPWLRNQLMLRQKSIYYFSMVLNLVLRLAWLQTVLHSSFEHVDYRVTGLFLAALEVIRRGQWNFYRLENEHLNNAGKFRAVKTVPLPFREVDEED.

At 1-387 (MVKFTKQFEG…HHRKESHSVT (387 aa)) the chain is on the cytoplasmic side. The SPX domain maps to 2-335 (VKFTKQFEGQ…GKQILPIYLK (334 aa)). Residues 388–408 (FFIGLFTGCFVALLAGYIIVA) form a helical membrane-spanning segment. Residues 409–429 (HLTGMYRQHSANTFYMETAYP) are Extracellular-facing. A helical transmembrane segment spans residues 430 to 450 (VLSMFGLLFLHLFLYGCNIFM). Topologically, residues 451 to 474 (WRKARINYSFIFELGSKNELKYRD) are cytoplasmic. A helical membrane pass occupies residues 475 to 495 (VFLICTASMSAIAGVMFVHLS). The Extracellular segment spans residues 496–507 (LLEKGYSFRQVQ). A helical membrane pass occupies residues 508 to 528 (VIPGLLLLGFLLILICPLNIF). Residues 529 to 654 (YKSSRYRLIS…TKVAYEKERS (126 aa)) are Cytoplasmic-facing. The region spanning 593 to 784 (MRVKYYRDLA…LPFREVDEED (192 aa)) is the EXS domain. Residues 655-675 (LGWLCLVVAMSSVATIYQLYW) traverse the membrane as a helical segment. Topologically, residues 676–703 (DFVKDWGLLQHNSNNPWLRNQLMLRQKS) are extracellular. The chain crosses the membrane as a helical span at residues 704 to 724 (IYYFSMVLNLVLRLAWLQTVL). Residues 725–784 (HSSFEHVDYRVTGLFLAALEVIRRGQWNFYRLENEHLNNAGKFRAVKTVPLPFREVDEED) are Cytoplasmic-facing.

This sequence belongs to the SYG1 (TC 2.A.94) family. As to expression, expressed in vascular cylinder of roots, leaves, stems, petals, sepals and filaments. Expressed in receptacle, stigma apex and anther connective tissue.

The protein localises to the cell membrane. Functionally, contributes to the loading of inorganic phosphate (Pi) into the root xylem vessels. The chain is Phosphate transporter PHO1 homolog 1 (PHO1-H1) from Arabidopsis thaliana (Mouse-ear cress).